The primary structure comprises 428 residues: uncharacterized protein (428 aa).

The region spanning 241-351 is the Glutaredoxin domain; the sequence is KEEEEQSVGK…KLLGGCERVE (111 aa). Residues 386 to 401 show a composition bias toward acidic residues; sequence EDDDDDDDEGDDDESV. A disordered region spans residues 386-405; it reads EDDDDDDDEGDDDESVKEER.

This is an uncharacterized protein from Arabidopsis thaliana (Mouse-ear cress).